A 524-amino-acid chain; its full sequence is Cytochrome c nitrite reductase subunit NrfA (524 aa).

A signal peptide spans 1-24 (MNNQKTFKGLRLAALGLVAVAAFT). Residues 29–39 (DVSTELKTPVY) form an interaction with NrfH region. Residues glycine 78, glutamate 117, and alanine 118 each coordinate Ca(2+). The heme site is built by histidine 121, cysteine 147, cysteine 150, lysine 151, cysteine 187, cysteine 190, and histidine 191. An interaction with NrfH region spans residues 221 to 222 (RN). Positions 229, 232, and 233 each coordinate heme. Positions 235, 236, 295, and 297 each coordinate Ca(2+). Residues histidine 309, cysteine 316, cysteine 319, histidine 320, histidine 335, cysteine 349, cysteine 352, histidine 353, and histidine 434 each coordinate heme. The interaction with NrfH stretch occupies residues 318–331 (DCHMSYTRSDDKKK). The segment at 351–355 (QCHSD) is interaction with NrfH.

It belongs to the cytochrome c-552 family. As to quaternary structure, component of the NrfHA cytochrome c nitrite reductase complex composed of 4 NrfA catalytic subunits and 2 NrfH quinone-binding subunits. NrfA homodimer interacts with NrfH. Ca(2+) serves as cofactor. Heme is required as a cofactor.

The protein localises to the cell inner membrane. It carries out the reaction 6 Fe(III)-[cytochrome c] + NH4(+) + 2 H2O = 6 Fe(II)-[cytochrome c] + nitrite + 8 H(+). Catalytic subunit of the cytochrome c nitrite reductase holocomplex NrfHA. Has both nitrite and sulfite reductase activities. Catalyzes the reduction of nitrite to ammonia, consuming six electrons acquired by the electron donor subunit NrfH from the menaquinone pool, in an anaerobic respiratory process of nitrite. The other biological function of the NrfHA holocomplex is to detoxify nitrite. This function is essential for the survival of this organism as it enables it to overcome inhibition by nitrite, which is produced by other organisms living in the same environment. The polypeptide is Cytochrome c nitrite reductase subunit NrfA (Nitratidesulfovibrio vulgaris (strain ATCC 29579 / DSM 644 / CCUG 34227 / NCIMB 8303 / VKM B-1760 / Hildenborough) (Desulfovibrio vulgaris)).